Reading from the N-terminus, the 147-residue chain is Hemoglobin subunit beta (147 aa).

Val2 is modified (N-acetylvaline). The region spanning 3–147 (HLTAEEKSAV…VANALAHKYH (145 aa)) is the Globin domain. Thr13 is modified (phosphothreonine). Ser45 bears the Phosphoserine mark. The residue at position 60 (Lys60) is an N6-acetyllysine. His64 provides a ligand contact to heme b. An N6-acetyllysine modification is found at Lys83. A heme b-binding site is contributed by His93. At Cys94 the chain carries S-nitrosocysteine. The residue at position 145 (Lys145) is an N6-acetyllysine.

This sequence belongs to the globin family. As to quaternary structure, heterotetramer of two alpha chains and two beta chains. As to expression, red blood cells.

Involved in oxygen transport from the lung to the various peripheral tissues. The protein is Hemoglobin subunit beta (HBB) of Sapajus apella (Brown-capped capuchin).